The chain runs to 323 residues: UDP-N-acetylenolpyruvoylglucosamine reductase (323 aa).

One can recognise an FAD-binding PCMH-type domain in the interval 52–217 (KSGGAADWLF…VSARLQGEPG (166 aa)). R197 is a catalytic residue. A disordered region spans residues 234–253 (EQSQPVRTKTGGSTFKNPPG). Polar residues predominate over residues 235–249 (QSQPVRTKTGGSTFK). S246 acts as the Proton donor in catalysis. E316 is an active-site residue.

It belongs to the MurB family. The cofactor is FAD.

The protein localises to the cytoplasm. The enzyme catalyses UDP-N-acetyl-alpha-D-muramate + NADP(+) = UDP-N-acetyl-3-O-(1-carboxyvinyl)-alpha-D-glucosamine + NADPH + H(+). The protein operates within cell wall biogenesis; peptidoglycan biosynthesis. Cell wall formation. The chain is UDP-N-acetylenolpyruvoylglucosamine reductase from Erythrobacter litoralis (strain HTCC2594).